A 138-amino-acid chain; its full sequence is Small ribosomal subunit protein uS11c (138 aa).

The disordered stretch occupies residues 1 to 23 (MAKPILRIGSRKNTRSSSRKNVR). Basic residues predominate over residues 9–23 (GSRKNTRSSSRKNVR).

Belongs to the universal ribosomal protein uS11 family. In terms of assembly, part of the 30S ribosomal subunit.

The protein resides in the plastid. The protein localises to the chloroplast. The chain is Small ribosomal subunit protein uS11c from Nasturtium officinale (Watercress).